The sequence spans 358 residues: Methylthioribose-1-phosphate isomerase (358 aa).

Substrate contacts are provided by residues 54-56, R96, and Q205; that span reads RGA. D246 acts as the Proton donor in catalysis. 256–257 contacts substrate; that stretch reads NK.

Belongs to the eIF-2B alpha/beta/delta subunits family. MtnA subfamily.

It catalyses the reaction 5-(methylsulfanyl)-alpha-D-ribose 1-phosphate = 5-(methylsulfanyl)-D-ribulose 1-phosphate. It participates in amino-acid biosynthesis; L-methionine biosynthesis via salvage pathway; L-methionine from S-methyl-5-thio-alpha-D-ribose 1-phosphate: step 1/6. Catalyzes the interconversion of methylthioribose-1-phosphate (MTR-1-P) into methylthioribulose-1-phosphate (MTRu-1-P). The protein is Methylthioribose-1-phosphate isomerase of Azotobacter vinelandii (strain DJ / ATCC BAA-1303).